Reading from the N-terminus, the 1842-residue chain is Fatty acid synthase subunit alpha (1842 aa).

Residues 101–141 are disordered; it reads PAEAPASTSSTPKVETAAAAAPAATPAPAPAQTSAPAAALP. Positions 116–139 are enriched in low complexity; sequence TAAAAAPAATPAPAPAQTSAPAAA. Residues 145-220 enclose the Carrier domain; the sequence is PKALEVLHTL…AIMQSSFNGS (76 aa). Ser-180 is subject to O-(pantetheine 4'-phosphoryl)serine. Ser-604 carries the phosphoserine modification. The region spanning 1079 to 1616 is the Ketosynthase family 3 (KS3) domain; that stretch reads LQEVVIDHDL…QVGGQVIVIH (538 aa). The active-site For beta-ketoacyl synthase activity is Cys-1262. The disordered stretch occupies residues 1304–1332; that stretch reads GATSNAAKETERGRTPQEMSRPATSTRDG. Ser-1412 carries the post-translational modification Phosphoserine. Active-site for beta-ketoacyl synthase activity residues include His-1501 and His-1542. The Mg(2+) site is built by Asp-1728, Val-1729, and Glu-1730. Acetyl-CoA-binding positions include 1728–1730, Tyr-1754, Ser-1764, 1773–1783, 1797–1800, and 1827–1829; these read DVE, EAVFKSLGISG, SSES, and ISH. Mg(2+) is bound by residues Ser-1828 and His-1829.

This sequence belongs to the thiolase-like superfamily. Fungal fatty acid synthetase subunit alpha family. In terms of assembly, [Alpha(6)beta(6)] hexamers of two multifunctional subunits (alpha and beta).

The enzyme catalyses acetyl-CoA + n malonyl-CoA + 2n NADPH + 4n H(+) = a long-chain-acyl-CoA + n CoA + n CO2 + 2n NADP(+).. It carries out the reaction a fatty acyl-[ACP] + malonyl-[ACP] + H(+) = a 3-oxoacyl-[ACP] + holo-[ACP] + CO2. It catalyses the reaction a (3R)-hydroxyacyl-[ACP] + NADP(+) = a 3-oxoacyl-[ACP] + NADPH + H(+). Its function is as follows. Fatty acid synthetase catalyzes the formation of long-chain fatty acids from acetyl-CoA, malonyl-CoA and NADPH. The alpha subunit contains domains for: acyl carrier protein, 3-oxoacyl-[acyl-carrier-protein] reductase, and 3-oxoacyl-[acyl-carrier-protein] synthase. This subunit coordinates the binding of the six beta subunits to the enzyme complex. This is Fatty acid synthase subunit alpha (fas2) from Schizosaccharomyces pombe (strain 972 / ATCC 24843) (Fission yeast).